The sequence spans 232 residues: Ribose-5-phosphate isomerase A (232 aa).

Residues 29-32 (SGST), 86-89 (DGAD), and 99-102 (KGGG) each bind substrate. The Proton acceptor role is filled by glutamate 108. Lysine 126 lines the substrate pocket.

Belongs to the ribose 5-phosphate isomerase family. As to quaternary structure, homodimer.

The catalysed reaction is aldehydo-D-ribose 5-phosphate = D-ribulose 5-phosphate. It participates in carbohydrate degradation; pentose phosphate pathway; D-ribose 5-phosphate from D-ribulose 5-phosphate (non-oxidative stage): step 1/1. Catalyzes the reversible conversion of ribose-5-phosphate to ribulose 5-phosphate. The chain is Ribose-5-phosphate isomerase A from Synechococcus sp. (strain ATCC 27144 / PCC 6301 / SAUG 1402/1) (Anacystis nidulans).